Reading from the N-terminus, the 183-residue chain is Dual-action ribosomal maturation protein DarP (183 aa).

It belongs to the DarP family.

The protein resides in the cytoplasm. Functionally, member of a network of 50S ribosomal subunit biogenesis factors which assembles along the 30S-50S interface, preventing incorrect 23S rRNA structures from forming. Promotes peptidyl transferase center (PTC) maturation. The protein is Dual-action ribosomal maturation protein DarP of Salmonella arizonae (strain ATCC BAA-731 / CDC346-86 / RSK2980).